The sequence spans 252 residues: Body wall muscle protein HR-29 (252 aa).

Ser2 bears the N-acetylserine mark. A run of 3 repeats spans residues 37–55 (RDWM…RDLS), 56–74 (QDWM…RDLS), and 75–93 (QDWM…RNLS). Residues 37–93 (RDWMTTPYSSTGIGRRDLSQDWMTTPYTPAGVGRRDLSQDWMTTPYTSKGIGSRNLS) are 3 X 19 AA approximate tandem repeats. The sHSP domain occupies 138-249 (ISVEHEGKTT…KKTAVPVTVE (112 aa)).

This sequence belongs to the small heat shock protein (HSP20) family. As to quaternary structure, exists as an oligomer.

Its subcellular location is the membrane. May be a component of myofibrils where it acts as a stabilizer. The chain is Body wall muscle protein HR-29 from Halocynthia roretzi (Sea squirt).